We begin with the raw amino-acid sequence, 156 residues long: Small ribosomal subunit protein uS7 (156 aa).

Belongs to the universal ribosomal protein uS7 family. Part of the 30S ribosomal subunit. Contacts proteins S9 and S11.

In terms of biological role, one of the primary rRNA binding proteins, it binds directly to 16S rRNA where it nucleates assembly of the head domain of the 30S subunit. Is located at the subunit interface close to the decoding center, probably blocks exit of the E-site tRNA. This is Small ribosomal subunit protein uS7 from Synechococcus sp. (strain CC9902).